The primary structure comprises 144 residues: Fluoride-specific ion channel FluC 1 (144 aa).

Helical transmembrane passes span L11–G31, L44–I64, V74–V94, and I107–Y127. 2 residues coordinate Na(+): G84 and T87.

It belongs to the fluoride channel Fluc/FEX (TC 1.A.43) family.

It localises to the cell membrane. It catalyses the reaction fluoride(in) = fluoride(out). With respect to regulation, na(+) is not transported, but it plays an essential structural role and its presence is essential for fluoride channel function. Its function is as follows. Fluoride-specific ion channel. Important for reducing fluoride concentration in the cell, thus reducing its toxicity. The sequence is that of Fluoride-specific ion channel FluC 1 from Bacillus cereus (strain ATCC 14579 / DSM 31 / CCUG 7414 / JCM 2152 / NBRC 15305 / NCIMB 9373 / NCTC 2599 / NRRL B-3711).